A 139-amino-acid chain; its full sequence is Putative flagella-related protein F (139 aa).

The N-terminal stretch at 1-18 (MGFSSVVGATVMIIALLV) is a signal peptide. Residue C19 is modified to N-acetylcysteine. C19 carries the S-archaeol cysteine lipid modification.

It to M.voltae FlaF.

The protein localises to the archaeal flagellum. Its subcellular location is the membrane. The polypeptide is Putative flagella-related protein F (flaF) (Methanocaldococcus jannaschii (strain ATCC 43067 / DSM 2661 / JAL-1 / JCM 10045 / NBRC 100440) (Methanococcus jannaschii)).